The following is a 2319-amino-acid chain: AT-rich interactive domain-containing protein 1B (2319 aa).

Low complexity-rich tracts occupy residues Met-1–Gly-21 and Gly-43–Pro-56. Disordered regions lie at residues Met-1–His-74, Val-155–Gly-306, Ala-321–Ala-414, Arg-487–Ala-546, Gln-577–Thr-1062, and Asp-1085–Lys-1129. At Ala-2 the chain carries N-acetylalanine. Gly residues predominate over residues Met-57–Leu-68. A compositionally biased stretch (basic residues) spans Gln-165–Ala-188. Low complexity-rich tracts occupy residues Leu-189–His-215 and Ser-343–Met-363. Positions Pro-365–Asn-379 are enriched in polar residues. Residues Gly-388–Ala-414 show a composition bias toward gly residues. Asymmetric dimethylarginine is present on Arg-487. A compositionally biased stretch (polar residues) spans Ala-489–Ser-510. An LXXLL motif is present at residues Leu-502 to Leu-506. Residues Pro-536 to Ala-546 are compositionally biased toward low complexity. A phosphoserine mark is found at Ser-585 and Ser-599. Arg-608 is modified (asymmetric dimethylarginine). Residues Ser-620–Gly-630 are compositionally biased toward low complexity. The residue at position 640 (Arg-640) is an Asymmetric dimethylarginine. Composition is skewed to low complexity over residues Gly-651–Gln-670, Gln-677–Gln-687, Pro-695–Gln-712, Ser-767–Ser-783, Gly-811–Ser-832, and Gly-840–Pro-849. Residues Thr-866–Thr-880 are compositionally biased toward polar residues. Residues Gly-881–Gly-892 show a composition bias toward low complexity. Composition is skewed to polar residues over residues Ser-899–Tyr-923 and Ser-947–Ser-958. Low complexity-rich tracts occupy residues Pro-980–Ser-994 and Glu-1014–Gln-1028. The span at Ser-1029–Thr-1062 shows a compositional bias: polar residues. Residues Glu-1136–Glu-1227 form the ARID domain. Disordered regions lie at residues Glu-1230–Met-1334, Glu-1346–Lys-1443, Asn-1475–Ser-1647, and Asp-1782–Ser-1852. Composition is skewed to polar residues over residues Ala-1254–Met-1273 and Ser-1287–Ile-1304. The span at Ser-1305–Pro-1319 shows a compositional bias: low complexity. Composition is skewed to polar residues over residues Lys-1320–Met-1334 and Pro-1364–Met-1388. Residues Pro-1426 to Pro-1440 show a composition bias toward low complexity. The short motif at Asn-1441–Asp-1460 is the Nuclear localization signal element. Polar residues-rich tracts occupy residues Leu-1522–Met-1534 and Glu-1579–Pro-1601. 3 positions are modified to phosphoserine: Ser-1625, Ser-1638, and Ser-1642. Residues Ala-1627–Lys-1641 are compositionally biased toward polar residues. A compositionally biased stretch (basic and acidic residues) spans Asp-1782–Ser-1791. Ser-1798 is modified (phosphoserine). Residues Gly-1799 to Glu-1823 show a composition bias toward acidic residues. The span at Ala-1842 to Ser-1852 shows a compositional bias: basic and acidic residues. Lys-1860 is subject to N6-acetyllysine. 2 disordered regions span residues Phe-1904–Lys-1941 and Arg-1954–Phe-1973. The span at Arg-1925–Glu-1940 shows a compositional bias: basic and acidic residues. The LXXLL signature appears at Leu-2119–Leu-2123.

As to quaternary structure, component of SWI/SNF chromatin remodeling complexes, in some of which it can be mutually exclusive with ARID1B/BAF250B. The canonical complex contains a catalytic subunit (either SMARCA4/BRG1/BAF190A or SMARCA2/BRM/BAF190B) and at least SMARCE1, ACTL6A/BAF53, SMARCC1/BAF155, SMARCC2/BAF170, and SMARCB1/SNF5/BAF47. Other subunits specific to each of the complexes may also be present permitting several possible combinations developmentally and tissue specific. Component of the BAF (SWI/SNF-A) complex, which includes at least actin (ACTB), ARID1A/BAF250A, ARID1B/BAF250B, SMARCA2/BRM, SMARCA4/BRG1/BAF190A, ACTL6A/BAF53, ACTL6B/BAF53B, SMARCE1/BAF57, SMARCC1/BAF155, SMARCC2/BAF170, SMARCB1/SNF5/INI1, and one or more SMARCD1/BAF60A, SMARCD2/BAF60B, or SMARCD3/BAF60C. In muscle cells, the BAF complex also contains DPF3. Component of neural progenitors-specific chromatin remodeling complex (npBAF complex) composed of at least, ARID1A/BAF250A or ARID1B/BAF250B, SMARCD1/BAF60A, SMARCD3/BAF60C, SMARCA2/BRM/BAF190B, SMARCA4/BRG1/BAF190A, SMARCB1/BAF47, SMARCC1/BAF155, SMARCE1/BAF57, SMARCC2/BAF170, PHF10/BAF45A, ACTL6A/BAF53A and actin. Component of neuron-specific chromatin remodeling complex (nBAF complex) composed of at least, ARID1A/BAF250A or ARID1B/BAF250B, SMARCD1/BAF60A, SMARCD3/BAF60C, SMARCA2/BRM/BAF190B, SMARCA4/BRG1/BAF190A, SMARCB1/BAF47, SMARCC1/BAF155, SMARCE1/BAF57, SMARCC2/BAF170, DPF1/BAF45B, DPF3/BAF45C, ACTL6B/BAF53B and actin. Component of a SWI/SNF-like EBAFb complex, at least composed of SMARCA4/BRG1/BAF190A, SMARCB1/BAF47/SNF5, ACTL6A/BAF53A, SMARCE1/BAF57, SMARCD1/BAF60A, SMARCD2/BAF60B, SMARCC1/BAF155, SMARCC2/BAF170, ARID1B/BAF250B, MLLT1/ENL and actin. Interacts through its C-terminus with SMARCA2/BRM/BAF190B and SMARCA4/BRG1/BAF190A. Interacts with SMARCC1/BAF155. Widely expressed with high levels in heart, skeletal muscle and kidney.

The protein localises to the nucleus. In terms of biological role, involved in transcriptional activation and repression of select genes by chromatin remodeling (alteration of DNA-nucleosome topology). Component of SWI/SNF chromatin remodeling complexes that carry out key enzymatic activities, changing chromatin structure by altering DNA-histone contacts within a nucleosome in an ATP-dependent manner. Belongs to the neural progenitors-specific chromatin remodeling complex (npBAF complex) and the neuron-specific chromatin remodeling complex (nBAF complex). During neural development a switch from a stem/progenitor to a postmitotic chromatin remodeling mechanism occurs as neurons exit the cell cycle and become committed to their adult state. The transition from proliferating neural stem/progenitor cells to postmitotic neurons requires a switch in subunit composition of the npBAF and nBAF complexes. As neural progenitors exit mitosis and differentiate into neurons, npBAF complexes which contain ACTL6A/BAF53A and PHF10/BAF45A, are exchanged for homologous alternative ACTL6B/BAF53B and DPF1/BAF45B or DPF3/BAF45C subunits in neuron-specific complexes (nBAF). The npBAF complex is essential for the self-renewal/proliferative capacity of the multipotent neural stem cells. The nBAF complex along with CREST plays a role regulating the activity of genes essential for dendrite growth. Binds DNA non-specifically. The sequence is that of AT-rich interactive domain-containing protein 1B from Homo sapiens (Human).